A 291-amino-acid polypeptide reads, in one-letter code: ATP synthase gamma chain (291 aa).

The protein belongs to the ATPase gamma chain family. As to quaternary structure, F-type ATPases have 2 components, CF(1) - the catalytic core - and CF(0) - the membrane proton channel. CF(1) has five subunits: alpha(3), beta(3), gamma(1), delta(1), epsilon(1). CF(0) has three main subunits: a, b and c.

It is found in the cell inner membrane. In terms of biological role, produces ATP from ADP in the presence of a proton gradient across the membrane. The gamma chain is believed to be important in regulating ATPase activity and the flow of protons through the CF(0) complex. The polypeptide is ATP synthase gamma chain (Verminephrobacter eiseniae (strain EF01-2)).